Reading from the N-terminus, the 329-residue chain is Cuticle collagen 6 (329 aa).

5 triple-helical region regions span residues 142-171 (GAAGPPGPEGPPGNDGKDGRNGNDGKNGRD), 189-212 (GAPGPMGAMGPKGPPGPKGSPGEP), 216-248 (GKSGDDGMAGQPGPIGRPGRDGMKGAPGAAGRL), 253-279 (GPQGAPGKPGPIGPPGPKGNPGPDGQS), and 282-320 (GPPGPPGDSGTPGHEGRAGPNGPAGPPGDNGEKGDCGHC). Residues 146-329 (PPGPEGPPGN…CPPPRTPPGY (184 aa)) form a disordered region. A compositionally biased stretch (basic and acidic residues) spans 156-173 (DGKDGRNGNDGKNGRDAE). Over residues 187–199 (PTGAPGPMGAMGP) the composition is skewed to low complexity. Over residues 200 to 212 (KGPPGPKGSPGEP) the composition is skewed to pro residues. Residues 251-272 (VPGPQGAPGKPGPIGPPGPKGN) show a composition bias toward pro residues. Over residues 273–282 (PGPDGQSYQG) the composition is skewed to low complexity. Residues 320–329 (CPPPRTPPGY) are compositionally biased toward pro residues.

The protein belongs to the cuticular collagen family. Collagen polypeptide chains are complexed within the cuticle by disulfide bonds and other types of covalent cross-links.

In terms of biological role, nematode cuticles are composed largely of collagen-like proteins. The cuticle functions both as an exoskeleton and as a barrier to protect the worm from its environment. The protein is Cuticle collagen 6 of Caenorhabditis elegans.